A 421-amino-acid chain; its full sequence is Testin (421 aa).

The 108-residue stretch at 92-199 (MILTNPVAAK…GDVKLPCEMD (108 aa)) folds into the PET domain. Positions 133–164 (EKQPVAGSEGAQYRKKQLAKQLPAHDQDPSKC) are disordered. Basic and acidic residues predominate over residues 155–164 (PAHDQDPSKC). LIM zinc-binding domains lie at 234–297 (YFCY…CDSE), 299–359 (PRCA…NHAV), and 362–421 (QGCH…KMMS).

It belongs to the prickle / espinas / testin family. As to quaternary structure, interacts via LIM domain 1 with ZYX. Interacts (via LIM domain 3) with ENAH and VASP. Interacts with ALKBH4, talin, actin, alpha-actinin, GRIP1 and PXN. Interacts (via LIM domain 2) with ACTL7A (via N-terminus). Heterodimer with ACTL7A; the heterodimer interacts with ENAH to form a heterotrimer.

The protein localises to the cytoplasm. It localises to the cell junction. It is found in the focal adhesion. Scaffold protein that may play a role in cell adhesion, cell spreading and in the reorganization of the actin cytoskeleton. Plays a role in the regulation of cell proliferation. May act as a tumor suppressor. The protein is Testin (TES) of Plecturocebus moloch (Dusky titi monkey).